The sequence spans 1033 residues: Tyrosine-protein kinase-like otk (1033 aa).

A signal peptide spans Met-1–Ala-22. Topologically, residues Ser-23 to Ala-581 are extracellular. 5 consecutive Ig-like C2-type domains span residues Ser-25–Ser-108, Pro-109–Ser-199, Pro-251–Ser-365, Pro-368–Asn-463, and Pro-468–Val-558. Asn-39 carries an N-linked (GlcNAc...) asparagine glycan. Cystine bridges form between Cys-46–Cys-95, Cys-137–Cys-188, Cys-276–Cys-354, and Cys-399–Cys-447. N-linked (GlcNAc...) asparagine glycosylation is found at Asn-336, Asn-417, Asn-429, Asn-444, Asn-457, Asn-512, and Asn-524. Cys-490 and Cys-542 are oxidised to a cystine. The chain crosses the membrane as a helical span at residues Val-582–Trp-602. Residues Cys-603–Lys-1033 lie on the Cytoplasmic side of the membrane. 2 disordered regions span residues Leu-617 to Ala-679 and Ser-718 to Met-760. A compositionally biased stretch (polar residues) spans Lys-655–Arg-673. Ser-678 carries the post-translational modification Phosphoserine. The Protein kinase; inactive domain maps to Leu-692 to Met-1028. The segment covering Thr-720–Ser-731 has biased composition (basic and acidic residues).

It belongs to the protein kinase superfamily. Tyr protein kinase family. Insulin receptor subfamily. As to quaternary structure, interacts with plexA; component of a receptor complex that mediates the repulsive signaling in response to Semaphorin ligands.

It localises to the cell membrane. Its function is as follows. Acts as a calcium-dependent, homophilic cell adhesion molecule that regulates neural recognition during the development of the nervous system. Component of the repulsive Plexin signaling response to regulate motor axon guidance at the embryonic stage. Also component of a receptor complex that is required in the adult visual system to innervate the lamina layer; specific targeting of R1-R6 axons. This is Tyrosine-protein kinase-like otk from Drosophila erecta (Fruit fly).